We begin with the raw amino-acid sequence, 386 residues long: MNIHEYQGKAILRSYGVSVPNGKVAFTVEEAVEAAKELGTDVCVVKAQIHAGGRGKAGGVKVAKNLEEVRTYAENILGSTLVTHQTGPEGKEVKRLLIEEGCDIKKEYYVGLVLDRATSQVVLMASEEGGTEIEEVAEKTPEKIFKEYIDPAVGLQGFQARRIAFHINIPKELVGQAVKFMMGLYRVFIEKDCSIAEINPLVTTGDGKVMALDAKLNFDSNALYRHKDILELRDLDEEDPKEIEASKYDLNYIPLDGNIGCMVNGAGLAMATMDIIKHYHGDPANFLDVGGGATAEKVTEAFKIILSDKNVKGIFVNIFGGIMKCDVIAEGVVEATKQVGLELPLVVRLEGTNVELGKKILNESGLNIVAAESMADGAQKIVSLVG.

The 236-residue stretch at 9–244 (KAILRSYGVS…LDEEDPKEIE (236 aa)) folds into the ATP-grasp domain. Residues lysine 46, 53–55 (GRG), glutamate 99, cysteine 102, and glutamate 107 each bind ATP. Positions 199 and 213 each coordinate Mg(2+). Substrate is bound by residues asparagine 264 and 321–323 (GIM).

It belongs to the succinate/malate CoA ligase beta subunit family. As to quaternary structure, heterotetramer of two alpha and two beta subunits. It depends on Mg(2+) as a cofactor.

The enzyme catalyses succinate + ATP + CoA = succinyl-CoA + ADP + phosphate. It catalyses the reaction GTP + succinate + CoA = succinyl-CoA + GDP + phosphate. The protein operates within carbohydrate metabolism; tricarboxylic acid cycle; succinate from succinyl-CoA (ligase route): step 1/1. Its function is as follows. Succinyl-CoA synthetase functions in the citric acid cycle (TCA), coupling the hydrolysis of succinyl-CoA to the synthesis of either ATP or GTP and thus represents the only step of substrate-level phosphorylation in the TCA. The beta subunit provides nucleotide specificity of the enzyme and binds the substrate succinate, while the binding sites for coenzyme A and phosphate are found in the alpha subunit. The polypeptide is Succinate--CoA ligase [ADP-forming] subunit beta (Bacillus cytotoxicus (strain DSM 22905 / CIP 110041 / 391-98 / NVH 391-98)).